The primary structure comprises 357 residues: Adenosine deaminase (357 aa).

Positions 16 and 18 each coordinate Zn(2+). Residues His18, Asp20, and Gly185 each contribute to the substrate site. His212 contributes to the Zn(2+) binding site. Catalysis depends on Glu215, which acts as the Proton donor. Asp294 contributes to the Zn(2+) binding site. Asp295 contacts substrate.

Belongs to the metallo-dependent hydrolases superfamily. Adenosine and AMP deaminases family. The cofactor is Zn(2+).

It is found in the cell membrane. It localises to the cell junction. The protein resides in the cytoplasmic vesicle lumen. The protein localises to the cytoplasm. Its subcellular location is the lysosome. The enzyme catalyses adenosine + H2O + H(+) = inosine + NH4(+). It carries out the reaction 2'-deoxyadenosine + H2O + H(+) = 2'-deoxyinosine + NH4(+). Catalyzes the hydrolytic deamination of adenosine and 2-deoxyadenosine. Plays an important role in purine metabolism and in adenosine homeostasis. Modulates signaling by extracellular adenosine, and so contributes indirectly to cellular signaling events. May act as a positive regulator of T-cell coactivation. The polypeptide is Adenosine deaminase (ADA) (Gallus gallus (Chicken)).